Here is a 293-residue protein sequence, read N- to C-terminus: Glutamyl-Q tRNA(Asp) synthetase (293 aa).

L-glutamate is bound by residues 8–12 and Glu-44; that span reads RFAPT. The 'HIGH' region motif lies at 11–21; that stretch reads PTPSGYLHFGS. Zn(2+) contacts are provided by Cys-100, Cys-102, Tyr-114, and Cys-118. L-glutamate contacts are provided by Tyr-171 and Arg-189. The 'KMSKS' region signature appears at 227–231; the sequence is KLGKS. ATP is bound at residue Lys-230.

It belongs to the class-I aminoacyl-tRNA synthetase family. GluQ subfamily. It depends on Zn(2+) as a cofactor.

Catalyzes the tRNA-independent activation of glutamate in presence of ATP and the subsequent transfer of glutamate onto a tRNA(Asp). Glutamate is transferred on the 2-amino-5-(4,5-dihydroxy-2-cyclopenten-1-yl) moiety of the queuosine in the wobble position of the QUC anticodon. The polypeptide is Glutamyl-Q tRNA(Asp) synthetase (Pseudomonas aeruginosa (strain ATCC 15692 / DSM 22644 / CIP 104116 / JCM 14847 / LMG 12228 / 1C / PRS 101 / PAO1)).